The chain runs to 196 residues: Probable cobalt-precorrin-6B C(15)-methyltransferase (decarboxylating) (196 aa).

Residues T24, G48–G52, D72, and A101 contribute to the S-adenosyl-L-methionine site.

It belongs to the methyltransferase superfamily. Archaeal-type CbiT family.

The catalysed reaction is Co-precorrin-6B + S-adenosyl-L-methionine = Co-precorrin-7 + S-adenosyl-L-homocysteine + CO2. The protein operates within cofactor biosynthesis; adenosylcobalamin biosynthesis; cob(II)yrinate a,c-diamide from sirohydrochlorin (anaerobic route): step 8/10. Its function is as follows. Catalyzes the methylation of C-15 in cobalt-precorrin-6B followed by the decarboxylation of C-12 to form cobalt-precorrin-7. This Pyrobaculum aerophilum (strain ATCC 51768 / DSM 7523 / JCM 9630 / CIP 104966 / NBRC 100827 / IM2) protein is Probable cobalt-precorrin-6B C(15)-methyltransferase (decarboxylating).